The sequence spans 522 residues: ATP synthase subunit alpha, mitochondrial (522 aa).

172–179 (GDRQTGKT) contacts ATP.

This sequence belongs to the ATPase alpha/beta chains family. In terms of assembly, F-type ATPases have 2 components, CF(1) - the catalytic core - and CF(0) - the membrane proton channel. CF(1) has five subunits: alpha(3), beta(3), gamma(1), delta(1), epsilon(1). CF(0) has three main subunits: a, b and c.

It localises to the mitochondrion. It is found in the mitochondrion inner membrane. Mitochondrial membrane ATP synthase (F(1)F(0) ATP synthase or Complex V) produces ATP from ADP in the presence of a proton gradient across the membrane which is generated by electron transport complexes of the respiratory chain. F-type ATPases consist of two structural domains, F(1) - containing the extramembraneous catalytic core, and F(0) - containing the membrane proton channel, linked together by a central stalk and a peripheral stalk. During catalysis, ATP synthesis in the catalytic domain of F(1) is coupled via a rotary mechanism of the central stalk subunits to proton translocation. Subunits alpha and beta form the catalytic core in F(1). Rotation of the central stalk against the surrounding alpha(3)beta(3) subunits leads to hydrolysis of ATP in three separate catalytic sites on the beta subunits. Subunit alpha does not bear the catalytic high-affinity ATP-binding sites. This chain is ATP synthase subunit alpha, mitochondrial (ATP1), found in Acanthamoeba castellanii (Amoeba).